We begin with the raw amino-acid sequence, 1024 residues long: Protein translocase subunit SecA (1024 aa).

Residues glutamine 143, 161–165 (GEGKT), and aspartate 661 each bind ATP. Positions 970 to 1024 (HKAAESVYTASSDEPETNQEESPQQPAIAEKKPGRNDLCPCGSGKKYKNCHGQQP) are disordered. Zn(2+)-binding residues include cysteine 1008, cysteine 1010, cysteine 1019, and histidine 1020.

The protein belongs to the SecA family. Monomer and homodimer. Part of the essential Sec protein translocation apparatus which comprises SecA, SecYEG and auxiliary proteins SecDF. Other proteins may also be involved. Zn(2+) serves as cofactor.

Its subcellular location is the cell inner membrane. The protein resides in the cytoplasm. The catalysed reaction is ATP + H2O + cellular proteinSide 1 = ADP + phosphate + cellular proteinSide 2.. Functionally, part of the Sec protein translocase complex. Interacts with the SecYEG preprotein conducting channel. Has a central role in coupling the hydrolysis of ATP to the transfer of proteins into and across the cell membrane, serving as an ATP-driven molecular motor driving the stepwise translocation of polypeptide chains across the membrane. This Pelodictyon phaeoclathratiforme (strain DSM 5477 / BU-1) protein is Protein translocase subunit SecA.